Consider the following 444-residue polypeptide: Glutamate-1-semialdehyde 2,1-aminomutase (444 aa).

K267 is subject to N6-(pyridoxal phosphate)lysine.

This sequence belongs to the class-III pyridoxal-phosphate-dependent aminotransferase family. HemL subfamily. In terms of assembly, homodimer. Pyridoxal 5'-phosphate serves as cofactor.

The protein localises to the cytoplasm. The enzyme catalyses (S)-4-amino-5-oxopentanoate = 5-aminolevulinate. The protein operates within porphyrin-containing compound metabolism; protoporphyrin-IX biosynthesis; 5-aminolevulinate from L-glutamyl-tRNA(Glu): step 2/2. This Xylella fastidiosa (strain M12) protein is Glutamate-1-semialdehyde 2,1-aminomutase.